The chain runs to 355 residues: tRNA-specific 2-thiouridylase MnmA (355 aa).

ATP-binding positions include 6–13 and Leu33; that span reads LLSGGVDS. Catalysis depends on Cys100, which acts as the Nucleophile. The cysteines at positions 100 and 195 are disulfide-linked. An ATP-binding site is contributed by Gly123. Positions 145 to 147 are interaction with tRNA; sequence KDQ. Cys195 serves as the catalytic Cysteine persulfide intermediate.

Belongs to the MnmA/TRMU family.

It is found in the cytoplasm. The enzyme catalyses S-sulfanyl-L-cysteinyl-[protein] + uridine(34) in tRNA + AH2 + ATP = 2-thiouridine(34) in tRNA + L-cysteinyl-[protein] + A + AMP + diphosphate + H(+). Functionally, catalyzes the 2-thiolation of uridine at the wobble position (U34) of tRNA, leading to the formation of s(2)U34. In Borrelia garinii subsp. bavariensis (strain ATCC BAA-2496 / DSM 23469 / PBi) (Borreliella bavariensis), this protein is tRNA-specific 2-thiouridylase MnmA.